Reading from the N-terminus, the 211-residue chain is Arginine exporter protein ArgO (211 aa).

At 1–38 the chain is on the cytoplasmic side; the sequence is MFSYYFQGLALGAAMILPLGPQNAFVMNQGIRRQYHIM. Residues 39–58 form a helical membrane-spanning segment; that stretch reads IALLCAISDLVLICAGIFGG. The Periplasmic segment spans residues 59-63; it reads SALLM. The helical transmembrane segment at 64 to 91 threads the bilayer; sequence QSPWLLALVTWGGVAFLLWYGFGAFKTA. Residues 92–102 are Cytoplasmic-facing; that stretch reads MSSNIELASAE. The chain crosses the membrane as a helical span at residues 103 to 130; the sequence is VMKQGRWKIIATMLAVTWLNPHVYLDTF. Over 131–140 the chain is Periplasmic; sequence VVLGSLGGQL. A helical transmembrane segment spans residues 141 to 170; sequence DVEPKRWFALGTISASFLWFFGLALLAAWL. Residues 171 to 173 lie on the Cytoplasmic side of the membrane; that stretch reads APR. Residues 174 to 200 traverse the membrane as a helical segment; that stretch reads LRTAKAQRIINLVVGCVMWFIALQLAR. Over 201–211 the chain is Periplasmic; that stretch reads DGIAHAQALFS.

It belongs to the LysE/ArgO transporter (TC 2.A.75) family. Monomer.

The protein localises to the cell inner membrane. It carries out the reaction L-arginine(in) = L-arginine(out). Functionally, involved in the export of arginine. Important to control the intracellular level of arginine and the correct balance between arginine and lysine. May also be involved in the export of canavanine (a plant-derived antimetabolite). The protein is Arginine exporter protein ArgO of Escherichia coli (strain K12).